The primary structure comprises 213 residues: Ribonuclease HII (213 aa).

In terms of domain architecture, RNase H type-2 spans 27–213 (HAVAGVDEAG…FRGVKEHVAP (187 aa)). D33, E34, and D125 together coordinate a divalent metal cation.

This sequence belongs to the RNase HII family. Mn(2+) serves as cofactor. Mg(2+) is required as a cofactor.

It is found in the cytoplasm. It catalyses the reaction Endonucleolytic cleavage to 5'-phosphomonoester.. Endonuclease that specifically degrades the RNA of RNA-DNA hybrids. The sequence is that of Ribonuclease HII from Geobacter metallireducens (strain ATCC 53774 / DSM 7210 / GS-15).